A 163-amino-acid polypeptide reads, in one-letter code: Phosphopantetheine adenylyltransferase (163 aa).

Serine 11 contacts substrate. ATP is bound by residues 11 to 12 and histidine 19; that span reads SF. Positions 43, 76, and 90 each coordinate substrate. ATP contacts are provided by residues 91-93, glutamate 101, and 126-132; these read GLR and WQALSSS.

Belongs to the bacterial CoaD family. In terms of assembly, homohexamer. Requires Mg(2+) as cofactor.

Its subcellular location is the cytoplasm. It carries out the reaction (R)-4'-phosphopantetheine + ATP + H(+) = 3'-dephospho-CoA + diphosphate. It functions in the pathway cofactor biosynthesis; coenzyme A biosynthesis; CoA from (R)-pantothenate: step 4/5. In terms of biological role, reversibly transfers an adenylyl group from ATP to 4'-phosphopantetheine, yielding dephospho-CoA (dPCoA) and pyrophosphate. The chain is Phosphopantetheine adenylyltransferase from Streptococcus pyogenes serotype M2 (strain MGAS10270).